The sequence spans 729 residues: Fatty acid oxidation complex subunit alpha (729 aa).

Residues 1–189 (MLYKGDTLYL…KIGLVDGVVK (189 aa)) are enoyl-CoA hydratase/isomerase. Residue aspartate 296 participates in substrate binding. Residues 311 to 729 (ETPKQAAVLG…ARPVGDLKTA (419 aa)) are 3-hydroxyacyl-CoA dehydrogenase. NAD(+)-binding positions include methionine 324, aspartate 343, 400–402 (VVE), lysine 407, and serine 429. Histidine 450 serves as the catalytic For 3-hydroxyacyl-CoA dehydrogenase activity. Asparagine 453 contacts NAD(+). Residues asparagine 500 and tyrosine 660 each contribute to the substrate site. A disordered region spans residues 708–729 (RHNEPYYPPVEPARPVGDLKTA).

The protein in the N-terminal section; belongs to the enoyl-CoA hydratase/isomerase family. In the C-terminal section; belongs to the 3-hydroxyacyl-CoA dehydrogenase family. As to quaternary structure, heterotetramer of two alpha chains (FadB) and two beta chains (FadA).

It carries out the reaction a (3S)-3-hydroxyacyl-CoA + NAD(+) = a 3-oxoacyl-CoA + NADH + H(+). The catalysed reaction is a (3S)-3-hydroxyacyl-CoA = a (2E)-enoyl-CoA + H2O. The enzyme catalyses a 4-saturated-(3S)-3-hydroxyacyl-CoA = a (3E)-enoyl-CoA + H2O. It catalyses the reaction (3S)-3-hydroxybutanoyl-CoA = (3R)-3-hydroxybutanoyl-CoA. It carries out the reaction a (3Z)-enoyl-CoA = a 4-saturated (2E)-enoyl-CoA. The catalysed reaction is a (3E)-enoyl-CoA = a 4-saturated (2E)-enoyl-CoA. It functions in the pathway lipid metabolism; fatty acid beta-oxidation. Its function is as follows. Involved in the aerobic and anaerobic degradation of long-chain fatty acids via beta-oxidation cycle. Catalyzes the formation of 3-oxoacyl-CoA from enoyl-CoA via L-3-hydroxyacyl-CoA. It can also use D-3-hydroxyacyl-CoA and cis-3-enoyl-CoA as substrate. This chain is Fatty acid oxidation complex subunit alpha, found in Shigella flexneri serotype 5b (strain 8401).